The following is a 23-amino-acid chain: Acidic phospholipase CHA-E6a (23 aa).

The protein belongs to the phospholipase A2 family. Group II subfamily. D49 sub-subfamily. The cofactor is Ca(2+). Contains 7 disulfide bonds. As to expression, expressed by the venom gland.

It is found in the secreted. It carries out the reaction a 1,2-diacyl-sn-glycero-3-phosphocholine + H2O = a 1-acyl-sn-glycero-3-phosphocholine + a fatty acid + H(+). Functionally, snake venom phospholipase A2 (PLA2) that shows high lipolytic (1048 umol/mg/min) and weak ADP-induced platelet aggregation activities. Also shows weak anticoagulant activity (IC(50) is less than 1.0 uM). PLA2 catalyzes the calcium-dependent hydrolysis of the 2-acyl groups in 3-sn-phosphoglycerides. The polypeptide is Acidic phospholipase CHA-E6a (Crotalus horridus (Timber rattlesnake)).